A 399-amino-acid polypeptide reads, in one-letter code: Forkhead box protein A4 (399 aa).

A DNA-binding region (fork-head) is located at residues 119 to 213; sequence KPPYSYISLI…ENGCYLRRQK (95 aa). The span at 219–234 shows a compositional bias: basic and acidic residues; it reads RSKSGEREKKVNKPGD. Residues 219 to 290 are disordered; that stretch reads RSKSGEREKK…VGLSPTSEQA (72 aa). The segment covering 267-277 has biased composition (polar residues); sequence STGSSIHQASG.

It localises to the nucleus. Its function is as follows. Transcriptional repressor involved in embryonic nervous system development. Plays a role in the induction and patterning of the anterior-posterior neural axis. Involved in the establishment of floor plate differentiation from neural plate cells during gastrulation. Binds the anf1 promoter sequence to restrict expression of anf1 to the anterior of the neural plate, thereby patterning the forebrain. Can bind to the HNF-3-alpha DNA target sequence. Cooperates with t/bra in a dose-dependent manner to specify dorsal mesoderm formation, including notochord. May be involved in the dorso-ventral patterning of the mesoderm. Binds to DNA via the target sequence 5'-[GA]TAAA[TC]A-3', with 5'-GTAAATA-3' being the preferred binding site. This is Forkhead box protein A4 from Xenopus tropicalis (Western clawed frog).